Reading from the N-terminus, the 347-residue chain is Bombesin receptor-activated protein C6orf89 homolog (347 aa).

The Cytoplasmic portion of the chain corresponds to 1-58 (MDLAANEISIYDKLSETVDLVRQTGHQCGMSEKAIEKFIRQLLEKNEPQRPPPQYPLL). Residues 59–79 (IVVYKVLATLGLILLTAYFVI) form a helical membrane-spanning segment. Residues 80-347 (QPFSPLAPEP…ICDGTAFSEL (268 aa)) are Extracellular-facing.

As to quaternary structure, homodimer. Interacts with BRS3. Interacts (via N-terminus) with SIN3B. Post-translationally, glycosylated.

It localises to the golgi apparatus membrane. Its subcellular location is the cytoplasm. In terms of biological role, exhibits histone deacetylase (HDAC) enhancer properties. May play a role in cell cycle progression and wound repair of bronchial epithelial cells. This Pongo abelii (Sumatran orangutan) protein is Bombesin receptor-activated protein C6orf89 homolog.